Consider the following 130-residue polypeptide: Histone H2A type 2 (130 aa).

The interval 1-22 (MSGRGKQGGKTRAKSKTRSSRA) is disordered. At serine 2 the chain carries N-acetylserine. Residue serine 2 is modified to Phosphoserine. Lysine 6 is modified (N6-(2-hydroxyisobutyryl)lysine). The residue at position 6 (lysine 6) is an N6-acetyllysine. Residues 7-19 (QGGKTRAKSKTRS) show a composition bias toward basic residues. Lysine 10 is modified (N6-(2-hydroxyisobutyryl)lysine; alternate). Residue lysine 10 is modified to N6-lactoyllysine; alternate. An N6-succinyllysine modification is found at lysine 10. Residues lysine 14 and lysine 16 each participate in a glycyl lysine isopeptide (Lys-Gly) (interchain with G-Cter in ubiquitin) cross-link. Lysine 37 carries the N6-(2-hydroxyisobutyryl)lysine; alternate modification. An N6-(2-hydroxyisobutyryl)lysine modification is found at lysine 76. N6-(2-hydroxyisobutyryl)lysine; alternate is present on lysine 96. Residue lysine 96 is modified to N6-succinyllysine. Position 96 is an N6-glutaryllysine; alternate (lysine 96). Glutamine 105 carries the post-translational modification N5-methylglutamine. Position 119 is an N6-(2-hydroxyisobutyryl)lysine; alternate (lysine 119). At lysine 119 the chain carries N6-glutaryllysine; alternate. Lysine 120 is covalently cross-linked (Glycyl lysine isopeptide (Lys-Gly) (interchain with G-Cter in ubiquitin)).

It belongs to the histone H2A family. As to quaternary structure, the nucleosome is a histone octamer containing two molecules each of H2A, H2B, H3 and H4 assembled in one H3-H4 heterotetramer and two H2A-H2B heterodimers. The octamer wraps approximately 147 bp of DNA. In terms of processing, monoubiquitination of Lys-120 (H2AK119Ub) gives a specific tag for epigenetic transcriptional repression. Following DNA double-strand breaks (DSBs), it is ubiquitinated through 'Lys-63' linkage of ubiquitin moieties, leading to the recruitment of repair proteins to sites of DNA damage. H2AK119Ub and ionizing radiation-induced 'Lys-63'-linked ubiquitination are distinct events. Phosphorylation on Ser-2 is enhanced during mitosis. Phosphorylation on Ser-2 directly represses transcription. Post-translationally, glutamine methylation at Gln-105 (H2AQ104me) by FBL is specifically dedicated to polymerase I. It is present at 35S ribosomal DNA locus and impairs binding of the FACT complex.

It is found in the nucleus. The protein resides in the chromosome. Functionally, core component of nucleosome. Nucleosomes wrap and compact DNA into chromatin, limiting DNA accessibility to the cellular machineries which require DNA as a template. Histones thereby play a central role in transcription regulation, DNA repair, DNA replication and chromosomal stability. DNA accessibility is regulated via a complex set of post-translational modifications of histones, also called histone code, and nucleosome remodeling. The sequence is that of Histone H2A type 2 from Xenopus laevis (African clawed frog).